Reading from the N-terminus, the 310-residue chain is Quinolinate synthase (310 aa).

Residues His27 and Ser44 each contribute to the iminosuccinate site. Residue Cys89 coordinates [4Fe-4S] cluster. Iminosuccinate contacts are provided by residues 115-117 (YVN) and Ser132. Cys175 is a binding site for [4Fe-4S] cluster. Residues 201-203 (HPE) and Thr222 each bind iminosuccinate. [4Fe-4S] cluster is bound at residue Cys267.

Belongs to the quinolinate synthase family. Type 2 subfamily. Requires [4Fe-4S] cluster as cofactor.

The protein localises to the cytoplasm. It carries out the reaction iminosuccinate + dihydroxyacetone phosphate = quinolinate + phosphate + 2 H2O + H(+). Its pathway is cofactor biosynthesis; NAD(+) biosynthesis; quinolinate from iminoaspartate: step 1/1. Catalyzes the condensation of iminoaspartate with dihydroxyacetone phosphate to form quinolinate. The polypeptide is Quinolinate synthase (Thermus thermophilus (strain ATCC BAA-163 / DSM 7039 / HB27)).